The primary structure comprises 370 residues: MRTISDLPVALVEEILSRVPLTSLSAVRSTCKTWNALSKTQIFGKTRQQFLGFMMIDFGLYSIKFDLQGLNYESDFVEPSIKRVSILDQLDIFKVFHCEGLLLCVFRGNRWPVVWNPYLGGTGWIQPISDFHKYQVSDKFAFGYENKNRNYKILRFLRYFFGFYDIYDLNSSAWKVLDVNPDCDIKCGVSLKGKTYFFAKEIAKAPNVKDFLVCFDFTAERFGPRLPLPFHSCGLFSEHVTLSCVRDEHLAVLYRRYNGVMEIYITTKIEPNEVFWSNFLKVDLTTFPDRFYGSRSHYFFIDEEKKVAVVFKNEPEWTMDCSYQTAYIIGKGGYLKSVKFGETPNDRKHNNAWNINSFMLSSYVPSLVQL.

One can recognise an F-box domain in the interval 1–46 (MRTISDLPVALVEEILSRVPLTSLSAVRSTCKTWNALSKTQIFGKT).

The protein is F-box protein At1g66490 of Arabidopsis thaliana (Mouse-ear cress).